A 381-amino-acid chain; its full sequence is MINLRKTHPLLKIINHSFIDLPAPSNISAWWNFGSLLGICLIIQILTGLFLAMHYTSDTLTAFSSVAHICRDVNHGWLLRNLHANGASMFFMCLFLHVGRGIYYGSYLYKETWNIGVILLLTVMATAFVGYVLPWGQMSFWGATVITNLLSTIPYIGTTLAEWIWGGFAVDKATLTRFFAFHFILPFIITALAVVHLLFLHETGSNNPSGINPDSDKIPFHPYYTIKDALGLMLLLLMLLLLALFSPDLLGDPDNFSPANPLNTPPHIKPEWYFLFAYAILRSIPNKLGGVLALLASILILLIIPLLHTANQRSMMFRPISQTLFWILTANLITLTWIGGQPVEQPFIIIGQLAPMLYFLLILVLMPFAGLFENYMLEPEW.

Transmembrane regions (helical) follow at residues 33-53 (FGSL…FLAM), 77-98 (WLLR…FLHV), 113-133 (WNIG…GYVL), and 178-198 (FFAF…VHLL). Positions 83 and 97 each coordinate heme b. H182 and H196 together coordinate heme b. H201 is a binding site for a ubiquinone. The next 4 helical transmembrane spans lie at 226–246 (IKDA…ALFS), 288–308 (LGGV…PLLH), 320–340 (ISQT…WIGG), and 347–367 (FIII…VLMP).

The protein belongs to the cytochrome b family. As to quaternary structure, the cytochrome bc1 complex contains 11 subunits: 3 respiratory subunits (MT-CYB, CYC1 and UQCRFS1), 2 core proteins (UQCRC1 and UQCRC2) and 6 low-molecular weight proteins (UQCRH/QCR6, UQCRB/QCR7, UQCRQ/QCR8, UQCR10/QCR9, UQCR11/QCR10 and a cleavage product of UQCRFS1). This cytochrome bc1 complex then forms a dimer. The cofactor is heme b.

It localises to the mitochondrion inner membrane. Functionally, component of the ubiquinol-cytochrome c reductase complex (complex III or cytochrome b-c1 complex) that is part of the mitochondrial respiratory chain. The b-c1 complex mediates electron transfer from ubiquinol to cytochrome c. Contributes to the generation of a proton gradient across the mitochondrial membrane that is then used for ATP synthesis. This Pseudantechinus bilarni (Sandstone dibbler) protein is Cytochrome b (MT-CYB).